The primary structure comprises 75 residues: DNA-directed RNA polymerase subunit omega (75 aa).

This sequence belongs to the RNA polymerase subunit omega family. In terms of assembly, in cyanobacteria the RNAP catalytic core is composed of 2 alpha, 1 beta, 1 beta', 1 gamma and 1 omega subunit. When a sigma factor is associated with the core the holoenzyme is formed, which can initiate transcription.

The enzyme catalyses RNA(n) + a ribonucleoside 5'-triphosphate = RNA(n+1) + diphosphate. Promotes RNA polymerase assembly. Latches the N- and C-terminal regions of the beta' subunit thereby facilitating its interaction with the beta and alpha subunits. The sequence is that of DNA-directed RNA polymerase subunit omega from Parasynechococcus marenigrum (strain WH8102).